The following is a 147-amino-acid chain: Hemoglobin subunit epsilon (147 aa).

A Globin domain is found at 3-147; that stretch reads HWSAEEKQLI…VAHALPRKYH (145 aa). 2 residues coordinate heme b: His-64 and His-93.

Belongs to the globin family. Heterotetramer of two epsilon chains and two alpha chains. As to expression, red blood cells.

In terms of biological role, beta-type chain found in early embryos. The chain is Hemoglobin subunit epsilon (HBE) from Cairina moschata (Muscovy duck).